The following is a 225-amino-acid chain: Phosphoribosylformylglycinamidine synthase subunit PurQ (225 aa).

The 221-residue stretch at 5-225 (SAVITFPGSN…ESVVRGLVEA (221 aa)) folds into the Glutamine amidotransferase type-1 domain. The Nucleophile role is filled by Cys-89. Catalysis depends on residues His-197 and Glu-199.

Part of the FGAM synthase complex composed of 1 PurL, 1 PurQ and 2 PurS subunits.

It localises to the cytoplasm. It carries out the reaction N(2)-formyl-N(1)-(5-phospho-beta-D-ribosyl)glycinamide + L-glutamine + ATP + H2O = 2-formamido-N(1)-(5-O-phospho-beta-D-ribosyl)acetamidine + L-glutamate + ADP + phosphate + H(+). The enzyme catalyses L-glutamine + H2O = L-glutamate + NH4(+). The protein operates within purine metabolism; IMP biosynthesis via de novo pathway; 5-amino-1-(5-phospho-D-ribosyl)imidazole from N(2)-formyl-N(1)-(5-phospho-D-ribosyl)glycinamide: step 1/2. Its function is as follows. Part of the phosphoribosylformylglycinamidine synthase complex involved in the purines biosynthetic pathway. Catalyzes the ATP-dependent conversion of formylglycinamide ribonucleotide (FGAR) and glutamine to yield formylglycinamidine ribonucleotide (FGAM) and glutamate. The FGAM synthase complex is composed of three subunits. PurQ produces an ammonia molecule by converting glutamine to glutamate. PurL transfers the ammonia molecule to FGAR to form FGAM in an ATP-dependent manner. PurS interacts with PurQ and PurL and is thought to assist in the transfer of the ammonia molecule from PurQ to PurL. The protein is Phosphoribosylformylglycinamidine synthase subunit PurQ of Novosphingobium aromaticivorans (strain ATCC 700278 / DSM 12444 / CCUG 56034 / CIP 105152 / NBRC 16084 / F199).